Consider the following 340-residue polypeptide: Integral membrane protein SED5 (340 aa).

Topologically, residues 1-319 are cytoplasmic; sequence MNIKDRTSEF…KYFDRIKSNR (319 aa). A disordered region spans residues 31–51; sequence RLQEKESENFANNTTGNGKSV. Over residues 39 to 51 the composition is skewed to polar residues; sequence NFANNTTGNGKSV. Positions 146–173 form a coiled coil; sequence LNTQMKNISGSFKDVLEERQRLEMANKD. The tract at residues 180–231 is disordered; the sequence is TDTGHAPADDQTQSNHAADLTTYNNSNPFMTSLLDESSEKNNNSSNQGELSF. The span at 189 to 209 shows a compositional bias: polar residues; that stretch reads DQTQSNHAADLTTYNNSNPFM. Residues 249 to 311 enclose the t-SNARE coiled-coil homology domain; it reads NVYLQERNRA…SGAQRELLKY (63 aa). The helical; Anchor for type IV membrane protein transmembrane segment at 320 to 340 threads the bilayer; the sequence is WLAAKVFFIIFVFFVIWVLVN.

The protein belongs to the syntaxin family. Interacts with SLY1, STF1, SFB3 and GOS1.

It localises to the membrane. The protein resides in the golgi apparatus membrane. Its function is as follows. Required for vesicular transport between the endoplasmic reticulum and the Golgi complex. Acts as a target organelle soluble NSF attachment protein receptor (t-SNARE). This is Integral membrane protein SED5 (SED5) from Saccharomyces cerevisiae (strain ATCC 204508 / S288c) (Baker's yeast).